The sequence spans 429 residues: Ribosomal RNA small subunit methyltransferase B (429 aa).

S-adenosyl-L-methionine-binding positions include Cys254 to Lys260, Asp277, Asp303, and Asp322. Cys375 serves as the catalytic Nucleophile.

This sequence belongs to the class I-like SAM-binding methyltransferase superfamily. RsmB/NOP family.

The protein resides in the cytoplasm. The catalysed reaction is cytidine(967) in 16S rRNA + S-adenosyl-L-methionine = 5-methylcytidine(967) in 16S rRNA + S-adenosyl-L-homocysteine + H(+). Its function is as follows. Specifically methylates the cytosine at position 967 (m5C967) of 16S rRNA. The protein is Ribosomal RNA small subunit methyltransferase B of Yersinia pestis bv. Antiqua (strain Angola).